The following is a 212-amino-acid chain: Ropporin-1 (212 aa).

The region spanning 12–43 is the RIIa domain; it reads PELPELLKQFTKAAIRTQPPDLIQWAAEYFGA. Serine 56 carries the post-translational modification Phosphoserine. Residues 209–212 form an interaction with RHPN1 region; sequence VRLE.

Belongs to the ropporin family. In terms of assembly, homodimer. Interacts with AKAP3. May interact with SPA17. Interacts with RHPN1. Interacts with FSCB; the interaction increases upon spermatozoa capacitation conditions. Interacts with CFAP61. Sumoylated, sumoylation decreases upon spermatozoa capacitation conditions.

It localises to the cell projection. The protein resides in the cilium. It is found in the flagellum. Its function is as follows. Important for male fertility. With ROPN1L, involved in fibrous sheath integrity and sperm motility, plays a role in PKA-dependent signaling processes required for spermatozoa capacitation. The sequence is that of Ropporin-1 (Ropn1) from Rattus norvegicus (Rat).